Reading from the N-terminus, the 1266-residue chain is Rho GTPase-activating protein 29 (1266 aa).

Residues serine 166, serine 171, serine 174, and serine 185 each carry the phosphoserine modification. One can recognise an F-BAR domain in the interval 187-457; sequence IELDNLLLKN…SAKLYDPGQE (271 aa). Residues 291-413 adopt a coiled-coil conformation; the sequence is RKNEMEKQRK…EILTQLRTLV (123 aa). Serine 496, serine 516, and serine 549 each carry phosphoserine. The span at 538 to 556 shows a compositional bias: low complexity; that stretch reads SESTGGSSESRSLDSESIS. A disordered region spans residues 538–596; sequence SESTGGSSESRSLDSESISPGDFHRKLPRTPSSGTMSSADDLDEREPPSPSEAGPNSLG. The Phorbol-ester/DAG-type zinc-finger motif lies at 609–654; that stretch reads THKFRKLRSPTKCRDCEGIVMFPGVECEECLLVCHRKCLENLVIVC. Positions 668 to 883 constitute a Rho-GAP domain; sequence AEFIQVAKKE…FLITYAQKIF (216 aa). 3 positions are modified to phosphoserine: serine 915, serine 951, and serine 1023. 3 disordered regions span residues 1033-1054, 1114-1153, and 1222-1248; these read AGSPTERSSRNTGNTDSDKFGK, VSTGNNRGHSSGAAQPSKAHADPARSARDTSEHSSSDSCP, and VQTSGQPKESSEEPGLPEGTPTCQRPR. Positions 1115–1127 are enriched in polar residues; it reads STGNNRGHSSGAA. The segment covering 1132 to 1148 has biased composition (basic and acidic residues); the sequence is AHADPARSARDTSEHSS. Residues serine 1149 and serine 1151 each carry the phosphoserine modification. Positions 1263 to 1266 are interaction with PTPN13/PTPL1; that stretch reads PQFV.

As to quaternary structure, interacts with PTPN13/PTPL1. Interacts with RAP2A via its coiled coil domain. Interacts with RASIP1.

GTPase activator for the Rho-type GTPases by converting them to an inactive GDP-bound state. Has strong activity toward RHOA, and weaker activity toward RAC1 and CDC42. May act as a specific effector of RAP2A to regulate Rho. In concert with RASIP1, suppresses RhoA signaling and dampens ROCK and MYH9 activities in endothelial cells and plays an essential role in blood vessel tubulogenesis. This Rattus norvegicus (Rat) protein is Rho GTPase-activating protein 29 (Arhgap29).